The chain runs to 288 residues: MANSPTPTMLAFLALGLALLLSATGQASAQNCGCQSNMCCSKWGYCGTGKDYCGDGCRSGPCYGGGGGGGGGGGGGGGGGGGSGVSVESVVTEAFFNGIKNQAPNGCAGKNFYTRQSFLNAAHSYSGFARDRTNDDSKREIAAFFAHVTHETGHMCYINEINGASMDYCDKNNKQWPCQPGKKYYGRGPLQISWNYNYGPAGQNIGFDGLRDPDRVAQDPTISFKTALWFWMNNVHQVMLQGFGATIRAINGALECNGKNPGAVNARVNYYKDYCRQFGVDPGGNLYC.

An N-terminal signal peptide occupies residues 1–29 (MANSPTPTMLAFLALGLALLLSATGQASA). A Chitin-binding type-1 domain is found at 30 to 64 (QNCGCQSNMCCSKWGYCGTGKDYCGDGCRSGPCYG). Cystine bridges form between cysteine 32–cysteine 40, cysteine 34–cysteine 46, cysteine 39–cysteine 53, cysteine 57–cysteine 62, cysteine 107–cysteine 156, cysteine 169–cysteine 178, and cysteine 256–cysteine 288. Glutamate 151 (proton donor) is an active-site residue.

The protein belongs to the glycosyl hydrolase 19 family. Chitinase class IV subfamily. As to expression, expressed in sheaths and meristems and at lower levels in roots and leaves.

It carries out the reaction Random endo-hydrolysis of N-acetyl-beta-D-glucosaminide (1-&gt;4)-beta-linkages in chitin and chitodextrins.. Functionally, may function in reproductive organs during embryogenesis and seed maturation. The protein is Chitinase 5 (Cht5) of Oryza sativa subsp. japonica (Rice).